Consider the following 263-residue polypeptide: uncharacterized protein (263 aa).

The first 22 residues, 1 to 22 (MEYLKRLALFISVIILTIFIMG), serve as a signal peptide directing secretion. Residue C23 is the site of N-palmitoyl cysteine attachment. C23 carries the S-diacylglycerol cysteine lipid modification.

This sequence belongs to the staphylococcal tandem lipoprotein family.

Its subcellular location is the cell membrane. This is an uncharacterized protein from Staphylococcus aureus (strain MSSA476).